A 404-amino-acid polypeptide reads, in one-letter code: Phosphopentomutase (404 aa).

Asp10, Asp297, His302, Asp338, His339, and His350 together coordinate Mn(2+).

This sequence belongs to the phosphopentomutase family. The cofactor is Mn(2+).

The protein resides in the cytoplasm. It carries out the reaction 2-deoxy-alpha-D-ribose 1-phosphate = 2-deoxy-D-ribose 5-phosphate. The enzyme catalyses alpha-D-ribose 1-phosphate = D-ribose 5-phosphate. It participates in carbohydrate degradation; 2-deoxy-D-ribose 1-phosphate degradation; D-glyceraldehyde 3-phosphate and acetaldehyde from 2-deoxy-alpha-D-ribose 1-phosphate: step 1/2. Its function is as follows. Isomerase that catalyzes the conversion of deoxy-ribose 1-phosphate (dRib-1-P) and ribose 1-phosphate (Rib-1-P) to deoxy-ribose 5-phosphate (dRib-5-P) and ribose 5-phosphate (Rib-5-P), respectively. The protein is Phosphopentomutase of Colwellia psychrerythraea (strain 34H / ATCC BAA-681) (Vibrio psychroerythus).